Consider the following 119-residue polypeptide: Large ribosomal subunit protein bL20 (119 aa).

It belongs to the bacterial ribosomal protein bL20 family.

Functionally, binds directly to 23S ribosomal RNA and is necessary for the in vitro assembly process of the 50S ribosomal subunit. It is not involved in the protein synthesizing functions of that subunit. This chain is Large ribosomal subunit protein bL20, found in Shewanella sediminis (strain HAW-EB3).